Reading from the N-terminus, the 373-residue chain is 4-hydroxy-3-methylbut-2-en-1-yl diphosphate synthase (flavodoxin) (373 aa).

The [4Fe-4S] cluster site is built by C270, C273, C305, and E312.

Belongs to the IspG family. The cofactor is [4Fe-4S] cluster.

The enzyme catalyses (2E)-4-hydroxy-3-methylbut-2-enyl diphosphate + oxidized [flavodoxin] + H2O + 2 H(+) = 2-C-methyl-D-erythritol 2,4-cyclic diphosphate + reduced [flavodoxin]. Its pathway is isoprenoid biosynthesis; isopentenyl diphosphate biosynthesis via DXP pathway; isopentenyl diphosphate from 1-deoxy-D-xylulose 5-phosphate: step 5/6. In terms of biological role, converts 2C-methyl-D-erythritol 2,4-cyclodiphosphate (ME-2,4cPP) into 1-hydroxy-2-methyl-2-(E)-butenyl 4-diphosphate. This chain is 4-hydroxy-3-methylbut-2-en-1-yl diphosphate synthase (flavodoxin), found in Klebsiella pneumoniae (strain 342).